A 257-amino-acid chain; its full sequence is MTYLDRILEHKQIEVAALKKEQPRQRYEELQAELEAPRNFSASLKRPANKGVRLIAEIKKASPSRGLIVQDFDPLAMAQRYQELGAAAFSVLTDQQFFQGSNDYLRQVKGAFKLPVLRKDFIVDALQIFEARLLGADAILLIVAALESSQLRDYLQLSAELGLSALVEVHDGAELDEALQQGATILGVNNRNLKDFSVDINTSIKLRPSIPSDMIAVAESGLKRAADIDAVNAAGFDAVLIGEGLHISTELRSLIWT.

It belongs to the TrpC family.

The enzyme catalyses 1-(2-carboxyphenylamino)-1-deoxy-D-ribulose 5-phosphate + H(+) = (1S,2R)-1-C-(indol-3-yl)glycerol 3-phosphate + CO2 + H2O. It participates in amino-acid biosynthesis; L-tryptophan biosynthesis; L-tryptophan from chorismate: step 4/5. The sequence is that of Indole-3-glycerol phosphate synthase from Chlorobium chlorochromatii (strain CaD3).